Reading from the N-terminus, the 422-residue chain is Histidine--tRNA ligase (422 aa).

The protein belongs to the class-II aminoacyl-tRNA synthetase family. In terms of assembly, homodimer.

The protein resides in the cytoplasm. It carries out the reaction tRNA(His) + L-histidine + ATP = L-histidyl-tRNA(His) + AMP + diphosphate + H(+). The polypeptide is Histidine--tRNA ligase (Nocardia farcinica (strain IFM 10152)).